Consider the following 776-residue polypeptide: Calcium-independent phospholipase A2-gamma (776 aa).

2 stretches are compositionally biased toward basic and acidic residues: residues 226 to 238 (RQLQ…EESK) and 307 to 331 (LKSD…ICKD). 2 disordered regions span residues 226–274 (RQLQ…EALP) and 306–331 (KLKS…ICKD). Positions 439-634 (LAIDGGGTRG…LLNNPSALAL (196 aa)) constitute a PNPLA domain. Positions 443-448 (GGGTRG) match the GXGXXG motif. Residues 469-489 (LFDYICGVSTGAILAFMLGLF) form a helical membrane-spanning segment. The GXSXG signature appears at 475 to 479 (GVSTG). The active-site Nucleophile is Ser477. Residue Asp621 is the Proton acceptor of the active site. A DGA/G motif is present at residues 621–623 (DGG). Position 730 is an N6-succinyllysine (Lys730).

It localises to the endoplasmic reticulum membrane. The protein localises to the microsome membrane. It is found in the mitochondrion membrane. Its subcellular location is the peroxisome membrane. It carries out the reaction a 1,2-diacyl-sn-glycero-3-phosphocholine + H2O = a 1-acyl-sn-glycero-3-phosphocholine + a fatty acid + H(+). The catalysed reaction is a 1,2-diacyl-sn-glycero-3-phosphocholine + H2O = a 2-acyl-sn-glycero-3-phosphocholine + a fatty acid + H(+). The enzyme catalyses a 1,2-diacyl-sn-glycero-3-phosphoethanolamine + H2O = a 1-acyl-sn-glycero-3-phosphoethanolamine + a fatty acid + H(+). It catalyses the reaction a 1-O-(1Z-alkenyl)-2-acyl-sn-glycero-3-phosphocholine + H2O = a 1-O-(1Z-alkenyl)-sn-glycero-3-phosphocholine + a fatty acid + H(+). It carries out the reaction a 1-acyl-sn-glycero-3-phosphocholine + H2O = sn-glycerol 3-phosphocholine + a fatty acid + H(+). The catalysed reaction is 1-acyl-2-(9Z,12Z)-octadecadienoyl-sn-glycero-3-phosphocholine + H2O = a 1-acyl-sn-glycero-3-phosphocholine + (9Z,12Z)-octadecadienoate + H(+). The enzyme catalyses 1-acyl-2-(5Z,8Z,11Z,14Z-eicosatetraenoyl)-sn-glycero-3-phosphocholine + H2O = a 1-acyl-sn-glycero-3-phosphocholine + (5Z,8Z,11Z,14Z)-eicosatetraenoate + H(+). It catalyses the reaction 1-hexadecanoyl-2-(5Z,8Z,11Z,14Z-eicosatetraenoyl)-sn-glycero-3-phosphocholine + H2O = 1-hexadecanoyl-sn-glycero-3-phosphocholine + (5Z,8Z,11Z,14Z)-eicosatetraenoate + H(+). It carries out the reaction 1-octadecanoyl-2-(9Z-octadecenoyl)-sn-glycero-3-phosphocholine + H2O = 1-octadecanoyl-sn-glycero-3-phosphocholine + (9Z)-octadecenoate + H(+). The catalysed reaction is 1-hexadecanoyl-2-(9Z-octadecenoyl)-sn-glycero-3-phosphocholine + H2O = 1-hexadecanoyl-sn-glycero-3-phosphocholine + (9Z)-octadecenoate + H(+). The enzyme catalyses 1-hexadecanoyl-2-(9Z,12Z-octadecadienoyl)-sn-glycero-3-phosphocholine + H2O = (9Z,12Z)-octadecadienoate + 1-hexadecanoyl-sn-glycero-3-phosphocholine + H(+). It catalyses the reaction 1-acyl-2-(9Z,12Z)-octadecadienoyl-sn-glycero-3-phosphoethanolamine + H2O = a 1-acyl-sn-glycero-3-phosphoethanolamine + (9Z,12Z)-octadecadienoate + H(+). It carries out the reaction 1-acyl-2-(5Z,8Z,11Z,14Z)-eicosatetraenoyl-sn-glycero-3-phosphoethanolamine + H2O = a 1-acyl-sn-glycero-3-phosphoethanolamine + (5Z,8Z,11Z,14Z)-eicosatetraenoate + H(+). The catalysed reaction is 1-hexadecanoyl-2-(5Z,8Z,11Z,14Z-eicosatetraenoyl)-sn-glycero-3-phosphoethanolamine + H2O = 1-hexadecanoyl-sn-glycero-3-phosphoethanolamine + (5Z,8Z,11Z,14Z)-eicosatetraenoate + H(+). The enzyme catalyses 1-hexadecanoyl-2-(5Z,8Z,11Z,14Z-eicosatetraenoyl)-sn-glycero-3-phosphocholine + H2O = 2-(5Z,8Z,11Z,14Z)-eicosatetraenoyl-sn-glycero-3-phosphocholine + hexadecanoate + H(+). It catalyses the reaction 1-octadecanoyl-2-(9Z-octadecenoyl)-sn-glycero-3-phosphocholine + H2O = 2-(9Z-octadecenoyl)-sn-glycero-3-phosphocholine + octadecanoate + H(+). It carries out the reaction 1-hexadecanoyl-2-(4Z,7Z,10Z,13Z,16Z,19Z-docosahexaenoyl)-sn-glycero-3-phosphocholine + H2O = 2-(4Z,7Z,10Z,13Z,16Z,19Z-docosahexaenoyl)-sn-glycero-3-phosphocholine + hexadecanoate + H(+). The catalysed reaction is 1-O-(1Z)-hexadecenyl-2 (5Z,8Z,11Z,14Z)-eicosatetraenoyl-sn-glycero-3-phosphocholine + H2O = 1-(1Z-hexadecenyl)-sn-glycero-3-phosphocholine + (5Z,8Z,11Z,14Z)-eicosatetraenoate + H(+). The enzyme catalyses 1-O-(1Z-hexadecenyl)-2-(9Z-octadecenoyl)-sn-glycero-3-phosphocholine + H2O = 1-(1Z-hexadecenyl)-sn-glycero-3-phosphocholine + (9Z)-octadecenoate + H(+). It catalyses the reaction 1-hexadecanoyl-sn-glycero-3-phosphocholine + H2O = sn-glycerol 3-phosphocholine + hexadecanoate + H(+). It carries out the reaction 1',3'-bis-[1,2-di-(9Z,12Z-octadecadienoyl)-sn-glycero-3-phospho]-glycerol + H2O = 1'-[1,2-di-(9Z,12Z-octadecadienoyl)-sn-glycero-3-phospho]-3'-[1-(9Z,12Z-octadecadienoyl)-sn-glycero-3-phospho]-glycerol + (9Z,12Z)-octadecadienoate + H(+). The catalysed reaction is 1'-[1-acyl-2-(9-hydroxy-(10E,12Z)-octadecadienoyl)-sn-glycero-3-phospho]-3'-[1,2-diacyl-sn-glycero-3-phospho]-glycerol + H2O = 9-hydroxy-(10E,12Z)-octadecadienoate + 1'-[1,2-diacyl-sn-glycero-3-phospho],3'-[1-acyl-sn-glycero-3-phospho]-glycerol + H(+). It functions in the pathway phospholipid metabolism. With respect to regulation, calcium-independent phospholipase. Calcium-independent and membrane-bound phospholipase, that catalyzes the esterolytic cleavage of fatty acids from glycerophospholipids to yield free fatty acids and lysophospholipids, hence regulating membrane physical properties and the release of lipid second messengers and growth factors. Hydrolyzes phosphatidylethanolamine, phosphatidylcholine and probably phosphatidylinositol with a possible preference for the former. Has also a broad substrate specificity in terms of fatty acid moieties, hydrolyzing saturated and mono-unsaturated fatty acids at nearly equal rates from either the sn-1 or sn-2 position in diacyl phosphatidylcholine. However, has a weak activity toward polyunsaturated fatty acids at the sn-2 position, and thereby favors the production of 2-arachidonoyl lysophosphatidylcholine, a key branch point metabolite in eicosanoid signaling. On the other hand, can produce arachidonic acid from the sn-1 position of diacyl phospholipid and from the sn-2 position of arachidonate-containing plasmalogen substrates. Therefore, plays an important role in the mobilization of arachidonic acid in response to cellular stimuli and the generation of lipid second messengers. Can also hydrolyze lysophosphatidylcholine. In the mitochondrial compartment, catalyzes the hydrolysis and release of oxidized aliphatic chains from cardiolipin and integrates mitochondrial bioenergetics and signaling. It is essential for maintaining efficient bioenergetic mitochondrial function through tailoring mitochondrial membrane lipid metabolism and composition. This chain is Calcium-independent phospholipase A2-gamma, found in Rattus norvegicus (Rat).